The following is a 188-amino-acid chain: Protein-arginine kinase activator protein (188 aa).

4 short sequence motifs (CXXC metal binding motif) span residues 3–6, 29–32, 87–90, and 105–108; these read CENC, CQTC, CPSC, and CANC. In terms of domain architecture, UVR spans 145-180; it reads KRKIEEKNEYLKKLIEIQDFEEAAIVRDEIKALKAE.

As to quaternary structure, interacts with McsB and CtsR; the CXXC motifs are needed for the binding.

Activates the phosphorylation activity of the protein-arginine kinase McsB. May function as an important molecule for oxidative tolerance in various types of stress including that of heavy metals. Binds to Cu(2+), Zn(2+), Co(2+) and Cd(2+) via its CXXC metal binding motifs. In Staphylococcus aureus (strain NCTC 8325 / PS 47), this protein is Protein-arginine kinase activator protein.